The following is a 349-amino-acid chain: Putative transport protein jhp_0514 (349 aa).

Helical transmembrane passes span 6 to 26 (FFWI…QDFL), 27 to 47 (MDAL…VFLN), 56 to 76 (SFLC…FIVY), 143 to 163 (LKLV…FYYG), 195 to 215 (VLLT…TMII), 224 to 244 (LGIL…LIWI), 258 to 278 (EAIF…DSVI), and 300 to 320 (ILIF…GIIV).

It belongs to the autoinducer-2 exporter (AI-2E) (TC 2.A.86) family.

The protein localises to the cell membrane. This Helicobacter pylori (strain J99 / ATCC 700824) (Campylobacter pylori J99) protein is Putative transport protein jhp_0514.